Here is a 586-residue protein sequence, read N- to C-terminus: Guanylate-binding protein 5 (586 aa).

Positions 1–306 (MALEIHMSDP…TYVNAISSGD (306 aa)) are NLRP3-binding. The segment at 1–309 (MALEIHMSDP…NAISSGDLPC (309 aa)) is GTPase domain (Globular). Residues 35–276 (TQPVVVVAIV…FCSYIFSHSM (242 aa)) enclose the GB1/RHD3-type G domain. GTP is bound by residues 45-52 (GLYRTGKS), 67-69 (VAS), 181-182 (RD), and leucine 245. The required for tetramerization, but not for dimerization stretch occupies residues 529 to 586 (MEIAKQNWLAEQQKMQEQQMQEQAAQLSTTFQAQNRSLLSELQHAQRTVNNDDPCVLL). Position 583 is a cysteine methyl ester (cysteine 583). Cysteine 583 carries the S-geranylgeranyl cysteine lipid modification. Positions 584 to 586 (VLL) are cleaved as a propeptide — removed in mature form.

It belongs to the TRAFAC class dynamin-like GTPase superfamily. GB1/RHD3 GTPase family. GB1 subfamily. As to quaternary structure, homodimer; homodimerizes upon GTP-binding, forming a close face-to-face dimer. Heterodimer with other family members, including GBP1, GBP2, GBP3 and GBP4. May also form tetramers (dimer of dimers) in the presence of GTP. Interacts with NLRP3, possibly in its tetrameric form, and promotes PYCARD/ASC polymerization. In terms of assembly, homodimer; homodimerizes upon GTP-binding. GDP-bound form remains homodimeric. Homodimer; homodimerizes upon GTP-binding. GDP-bound is monomeric. Isoprenylation is required for proper subcellular location. As to expression, expressed in peripheral blood monocytes (at protein level).

The protein resides in the cytoplasmic vesicle membrane. Its subcellular location is the golgi apparatus membrane. The protein localises to the cytoplasm. It catalyses the reaction GTP + H2O = GDP + phosphate + H(+). Its function is as follows. Interferon (IFN)-inducible GTPase that plays important roles in innate immunity against a diverse range of bacterial, viral and protozoan pathogens. Hydrolyzes GTP, but in contrast to other family members, does not produce GMP. Following infection, recruited to the pathogen-containing vacuoles or vacuole-escaped bacteria and acts as a positive regulator of inflammasome assembly by promoting the release of inflammasome ligands from bacteria. Acts by promoting lysis of pathogen-containing vacuoles, releasing pathogens into the cytosol. Following pathogen release in the cytosol, promotes recruitment of proteins that mediate bacterial cytolysis: this liberates ligands that are detected by inflammasomes, such as lipopolysaccharide (LPS) that activates the non-canonical CASP4/CASP11 inflammasome or double-stranded DNA (dsDNA) that activates the AIM2 inflammasome. As an activator of NLRP3 inflammasome assembly: promotes selective NLRP3 inflammasome assembly in response to microbial and soluble, but not crystalline, agents. Independently of its GTPase activity, acts as an inhibitor of various viruses infectivity, such as HIV-1, Zika and influenza A viruses, by inhibiting FURIN-mediated maturation of viral envelope proteins. Functionally, antigenic tumor-specific truncated splice form. The protein is Guanylate-binding protein 5 of Homo sapiens (Human).